The primary structure comprises 214 residues: Thiamine pyrophosphokinase (214 aa).

This sequence belongs to the thiamine pyrophosphokinase family.

The enzyme catalyses thiamine + ATP = thiamine diphosphate + AMP + H(+). The protein operates within cofactor biosynthesis; thiamine diphosphate biosynthesis; thiamine diphosphate from thiamine: step 1/1. In terms of biological role, catalyzes the ATP-dependent phosphorylation of thiamine to thiamine pyrophosphate. Is involved in thiamine salvage. The protein is Thiamine pyrophosphokinase of Bacillus subtilis (strain 168).